The sequence spans 424 residues: MEKALLEIEEKARLAKAASRPLSYASSAQKDAALKNIAACLLNNAPAILEANLKDQTEAKAAGMTAAMLDRLIITQSRLEGIAKDTLAIAALPDPVGEIFDMNTMPNGLVIGKKRVPLGVIAAIYESRPNVTVDIAALCLKAGNAVILRGGKETIHSNTILARLIRQAVEEAGLPQEAVQFIENTEHSLVNHLLKLSDQIDLVIPRGGAGLISYVKQNSFIPVVAGGIGVVHIYVDADANIADAVNIAYNSKVQRPTVCNAMDTLLVHKDIAAAFLPVVAAEWSKAGVEIRADKTAMEILENASSCKLIPAAADDWGKEFLALVAAVKVVDSLDEALSHIARYGSGHTESIVTQNYTSSQRFLNEVDAAAVMVNASTRFTDGSQFGLGAELGISTQKMHARGPMGLKEITSYKWIVYGNGQIRG.

This sequence belongs to the gamma-glutamyl phosphate reductase family.

It localises to the cytoplasm. The catalysed reaction is L-glutamate 5-semialdehyde + phosphate + NADP(+) = L-glutamyl 5-phosphate + NADPH + H(+). It functions in the pathway amino-acid biosynthesis; L-proline biosynthesis; L-glutamate 5-semialdehyde from L-glutamate: step 2/2. In terms of biological role, catalyzes the NADPH-dependent reduction of L-glutamate 5-phosphate into L-glutamate 5-semialdehyde and phosphate. The product spontaneously undergoes cyclization to form 1-pyrroline-5-carboxylate. The polypeptide is Gamma-glutamyl phosphate reductase (Dehalococcoides mccartyi (strain ATCC BAA-2266 / KCTC 15142 / 195) (Dehalococcoides ethenogenes (strain 195))).